We begin with the raw amino-acid sequence, 181 residues long: uncharacterized protein (181 aa).

The disordered stretch occupies residues 25–47; it reads ELANEVSAGDEEPYDDDIWESED. A compositionally biased stretch (acidic residues) spans 32–47; sequence AGDEEPYDDDIWESED. Residues 149–169 traverse the membrane as a helical segment; that stretch reads ILTLILLSCGLLMLFIGYPIL.

The protein resides in the cytoplasm. The protein localises to the membrane. This is an uncharacterized protein from Schizosaccharomyces pombe (strain 972 / ATCC 24843) (Fission yeast).